A 448-amino-acid polypeptide reads, in one-letter code: Probable cytosolic Fe-S cluster assembly factor Bm6838 (448 aa).

The [4Fe-4S] cluster site is built by Cys27, Cys66, Cys69, Cys72, Cys170, Cys226, Cys370, and Cys374.

This sequence belongs to the NARF family.

In terms of biological role, component of the cytosolic iron-sulfur (Fe/S) protein assembly machinery. Required for maturation of extramitochondrial Fe/S proteins. This Brugia malayi (Filarial nematode worm) protein is Probable cytosolic Fe-S cluster assembly factor Bm6838.